A 124-amino-acid chain; its full sequence is Small ribosomal subunit protein uS12 (124 aa).

Residues 1–20 (MATISQLVRNPRKDKVQKTS) are disordered. A 3-methylthioaspartic acid modification is found at Asp-89. The tract at residues 104-124 (TSGVTARRKGRSKYGAKRPKA) is disordered. Positions 109-124 (ARRKGRSKYGAKRPKA) are enriched in basic residues.

It belongs to the universal ribosomal protein uS12 family. In terms of assembly, part of the 30S ribosomal subunit. Contacts proteins S8 and S17. May interact with IF1 in the 30S initiation complex.

With S4 and S5 plays an important role in translational accuracy. Its function is as follows. Interacts with and stabilizes bases of the 16S rRNA that are involved in tRNA selection in the A site and with the mRNA backbone. Located at the interface of the 30S and 50S subunits, it traverses the body of the 30S subunit contacting proteins on the other side and probably holding the rRNA structure together. The combined cluster of proteins S8, S12 and S17 appears to hold together the shoulder and platform of the 30S subunit. This chain is Small ribosomal subunit protein uS12, found in Psychromonas ingrahamii (strain DSM 17664 / CCUG 51855 / 37).